We begin with the raw amino-acid sequence, 457 residues long: Argininosuccinate lyase (457 aa).

Belongs to the lyase 1 family. Argininosuccinate lyase subfamily.

Its subcellular location is the cytoplasm. It catalyses the reaction 2-(N(omega)-L-arginino)succinate = fumarate + L-arginine. Its pathway is amino-acid biosynthesis; L-arginine biosynthesis; L-arginine from L-ornithine and carbamoyl phosphate: step 3/3. The sequence is that of Argininosuccinate lyase from Psychrobacter arcticus (strain DSM 17307 / VKM B-2377 / 273-4).